Here is a 772-residue protein sequence, read N- to C-terminus: Phosphoribosylformylglycinamidine synthase subunit PurL (772 aa).

Histidine 62 is a catalytic residue. Tyrosine 65 and lysine 109 together coordinate ATP. Glutamate 111 lines the Mg(2+) pocket. Substrate-binding positions include 112–115 (SHNH) and arginine 134. The active-site Proton acceptor is histidine 113. Aspartate 135 serves as a coordination point for Mg(2+). Residue glutamine 259 participates in substrate binding. Aspartate 287 contacts Mg(2+). A substrate-binding site is contributed by 331–333 (ESQ). Residues aspartate 519 and glycine 556 each contribute to the ATP site. Residue asparagine 557 participates in Mg(2+) binding. Substrate is bound at residue serine 559.

It belongs to the FGAMS family. As to quaternary structure, monomer. Part of the FGAM synthase complex composed of 1 PurL, 1 PurQ and 2 PurS subunits.

Its subcellular location is the cytoplasm. It catalyses the reaction N(2)-formyl-N(1)-(5-phospho-beta-D-ribosyl)glycinamide + L-glutamine + ATP + H2O = 2-formamido-N(1)-(5-O-phospho-beta-D-ribosyl)acetamidine + L-glutamate + ADP + phosphate + H(+). Its pathway is purine metabolism; IMP biosynthesis via de novo pathway; 5-amino-1-(5-phospho-D-ribosyl)imidazole from N(2)-formyl-N(1)-(5-phospho-D-ribosyl)glycinamide: step 1/2. Its function is as follows. Part of the phosphoribosylformylglycinamidine synthase complex involved in the purines biosynthetic pathway. Catalyzes the ATP-dependent conversion of formylglycinamide ribonucleotide (FGAR) and glutamine to yield formylglycinamidine ribonucleotide (FGAM) and glutamate. The FGAM synthase complex is composed of three subunits. PurQ produces an ammonia molecule by converting glutamine to glutamate. PurL transfers the ammonia molecule to FGAR to form FGAM in an ATP-dependent manner. PurS interacts with PurQ and PurL and is thought to assist in the transfer of the ammonia molecule from PurQ to PurL. The polypeptide is Phosphoribosylformylglycinamidine synthase subunit PurL (Leifsonia xyli subsp. xyli (strain CTCB07)).